A 420-amino-acid chain; its full sequence is Putative FBD-associated F-box protein At1g78730 (420 aa).

Residues 21–71 (LDWLRKLPDSLLCQVFLNLPTKDVVKTSVLSSTWGNIWRSVPGLDLGYGDF) enclose the F-box domain. The FBD domain occupies 341 to 390 (ISILPGPQCNLPALEFVDILKPMVEKETELKLMSYFLEKSTILKKLTLRL).

This chain is Putative FBD-associated F-box protein At1g78730, found in Arabidopsis thaliana (Mouse-ear cress).